The following is a 161-amino-acid chain: Large ribosomal subunit protein uL15 (161 aa).

The segment covering 1 to 10 (MKLNELRDNP) has biased composition (basic and acidic residues). Residues 1-42 (MKLNELRDNPGARPKSKRLGRGIGSGKGKTSGKGVKGQKARE) form a disordered region. Positions 21 to 35 (RGIGSGKGKTSGKGV) are enriched in gly residues.

The protein belongs to the universal ribosomal protein uL15 family. In terms of assembly, part of the 50S ribosomal subunit.

Its function is as follows. Binds to the 23S rRNA. The protein is Large ribosomal subunit protein uL15 of Acidiphilium cryptum (strain JF-5).